A 599-amino-acid polypeptide reads, in one-letter code: Protein ref(2)P (599 aa).

Residues 3-88 (EKLLKITYQG…CESNMHVQVA (86 aa)) form the PB1 domain. Residues 122–173 (HDSVQCDGCGLAPLIGFRYKCVQCSNFDLCQKCESAHKHPEHLMLRMPTNNG) form a ZZ-type zinc finger. Residues Cys127, Cys130, Cys142, Cys145, Cys151, Cys154, His160, and His163 each contribute to the Zn(2+) site. 4 disordered regions span residues 192–225 (RRSR…HARR), 245–319 (TTAT…INLD), 357–453 (GIFA…LDPE), and 507–544 (ASAN…DDKR). The segment covering 199-211 (PFQEASQPAPAAE) has biased composition (low complexity). A compositionally biased stretch (basic and acidic residues) spans 276 to 286 (KATESEAKPTE). Polar residues predominate over residues 291–319 (NTDQSVPTTEDPVTTPRSTEPTTPVINLD). The segment covering 375-411 (QSQSSGQSAASSASQSAVPSAAPSANQSNVPSANQSA) has biased composition (low complexity). 3 consecutive repeat copies span residues 386–393 (SASQSAVP), 399–406 (ANQSNVPS), and 407–413 (ANQSATP). The interval 386 to 413 (SASQSAVPSAAPSANQSNVPSANQSATP) is 3 X 8 AA repeats of S-A-N-Q-S-X-X-P. Positions 412 to 423 (TPSISGSISDAQ) are enriched in polar residues. Positions 511–536 (TQTAQVDTVSTSTSTTSVTTNSVGTS) are enriched in low complexity. Positions 550 to 595 (HTDERINQSIHAMMAMGFSNEGAWLTQLLESVQGNIPAALDVMHVS) constitute a UBA domain.

As to quaternary structure, interacts with aPKC and Traf6.

It is found in the nucleus. It localises to the cytoplasm. In terms of biological role, required for selective autophagy activation by ubiquitinated proteins. Implicated in sigma rhabdovirus multiplication and necessary for male fertility. Involved in activating transcription of Drs. The chain is Protein ref(2)P (ref(2)P) from Drosophila simulans (Fruit fly).